Consider the following 134-residue polypeptide: Arsenate reductase 2 (134 aa).

Active-site nucleophile residues include Cys-11, Cys-83, and Cys-90. Cystine bridges form between Cys-11–Cys-83 and Cys-83–Cys-90.

Belongs to the low molecular weight phosphotyrosine protein phosphatase family. Thioredoxin-coupled ArsC subfamily.

Its subcellular location is the cytoplasm. The catalysed reaction is arsenate + [thioredoxin]-dithiol + H(+) = arsenite + [thioredoxin]-disulfide + H2O. Functionally, catalyzes the reduction of arsenate [As(V)] to arsenite [As(III)]. This Bacillus cereus (strain ATCC 10987 / NRS 248) protein is Arsenate reductase 2.